Consider the following 408-residue polypeptide: Tryptophan--tRNA ligase, chloroplastic/mitochondrial (408 aa).

Residues Met-1–Cys-52 constitute a chloroplast and mitochondrion transit peptide. Ser-53 is subject to N-acetylserine. Residues Gln-72 and His-78–Asn-81 contribute to the ATP site. The 'HIGH' region motif lies at Pro-73–Asn-81. An L-tryptophan-binding site is contributed by Asp-197. Residues Gly-209–Asp-211, Val-260, Lys-269–Ser-273, and Lys-272 each bind ATP. The 'KMSKS' region signature appears at Lys-269–Ser-273.

This sequence belongs to the class-I aminoacyl-tRNA synthetase family.

It is found in the plastid. The protein localises to the chloroplast. The protein resides in the mitochondrion. The enzyme catalyses tRNA(Trp) + L-tryptophan + ATP = L-tryptophyl-tRNA(Trp) + AMP + diphosphate + H(+). This is Tryptophan--tRNA ligase, chloroplastic/mitochondrial from Arabidopsis thaliana (Mouse-ear cress).